The primary structure comprises 156 residues: 2-C-methyl-D-erythritol 2,4-cyclodiphosphate synthase (156 aa).

The a divalent metal cation site is built by Asp10 and His12. 4-CDP-2-C-methyl-D-erythritol 2-phosphate is bound by residues 10-12 (DSH) and 36-37 (HS). Position 44 (His44) interacts with a divalent metal cation. Residues 58–60 (DIG) and 63–67 (FKDTD) contribute to the 4-CDP-2-C-methyl-D-erythritol 2-phosphate site.

Belongs to the IspF family. As to quaternary structure, homotrimer. Requires a divalent metal cation as cofactor.

It catalyses the reaction 4-CDP-2-C-methyl-D-erythritol 2-phosphate = 2-C-methyl-D-erythritol 2,4-cyclic diphosphate + CMP. Its pathway is isoprenoid biosynthesis; isopentenyl diphosphate biosynthesis via DXP pathway; isopentenyl diphosphate from 1-deoxy-D-xylulose 5-phosphate: step 4/6. Functionally, involved in the biosynthesis of isopentenyl diphosphate (IPP) and dimethylallyl diphosphate (DMAPP), two major building blocks of isoprenoid compounds. Catalyzes the conversion of 4-diphosphocytidyl-2-C-methyl-D-erythritol 2-phosphate (CDP-ME2P) to 2-C-methyl-D-erythritol 2,4-cyclodiphosphate (ME-CPP) with a corresponding release of cytidine 5-monophosphate (CMP). The sequence is that of 2-C-methyl-D-erythritol 2,4-cyclodiphosphate synthase from Aquifex aeolicus (strain VF5).